The sequence spans 111 residues: Photosystem II reaction center Psb28 protein (111 aa).

It belongs to the Psb28 family. In terms of assembly, part of the photosystem II complex.

The protein localises to the cellular thylakoid membrane. The polypeptide is Photosystem II reaction center Psb28 protein (Nostoc sp. (strain PCC 7120 / SAG 25.82 / UTEX 2576)).